Consider the following 128-residue polypeptide: Nucleoside diphosphate kinase B (128 aa).

At Met-1 the chain carries N-acetylmethionine. Residues Lys-9, Phe-39, Thr-70, Arg-81, and Asn-91 each contribute to the ATP site. Catalysis depends on His-94, which acts as the Pros-phosphohistidine intermediate.

The protein belongs to the NDK family. Requires Mg(2+) as cofactor.

The protein localises to the cytoplasm. Its subcellular location is the nucleus. It localises to the cell projection. It is found in the lamellipodium. The protein resides in the ruffle. It carries out the reaction a 2'-deoxyribonucleoside 5'-diphosphate + ATP = a 2'-deoxyribonucleoside 5'-triphosphate + ADP. It catalyses the reaction a ribonucleoside 5'-diphosphate + ATP = a ribonucleoside 5'-triphosphate + ADP. Major role in the synthesis of nucleoside triphosphates other than ATP. The sequence is that of Nucleoside diphosphate kinase B (nme2) from Merluccius australis australis (Austral hake).